Consider the following 349-residue polypeptide: Ureidoglycolate dehydrogenase (NAD(+)) (349 aa).

His-116 serves as the catalytic Proton acceptor. NAD(+) is bound by residues Ser-140, 174–176 (DMA), Lys-224, and 306–308 (GQD).

Belongs to the LDH2/MDH2 oxidoreductase family. Homodimer.

The protein localises to the cytoplasm. The catalysed reaction is (S)-ureidoglycolate + NAD(+) = N-carbamoyl-2-oxoglycine + NADH + H(+). It functions in the pathway nitrogen metabolism; (S)-allantoin degradation; oxalurate from (S)-ureidoglycolate: step 1/1. Its function is as follows. AllD plays a pivotal role as a metabolic branch-point enzyme in nitrogen utilization via the assimilation of allantoin. It is able to utilize allantoin as a sole source of nitrogen under anaerobic conditions. Catalyzes the oxidation of ureidoglycolate to oxalurate. The protein is Ureidoglycolate dehydrogenase (NAD(+)) of Escherichia coli (strain K12).